Here is a 314-residue protein sequence, read N- to C-terminus: tRNA dimethylallyltransferase (314 aa).

12–19 lines the ATP pocket; it reads GPTASGKT. Substrate is bound at residue 14–19; the sequence is TASGKT. 2 interaction with substrate tRNA regions span residues 37–40 and 161–165; these read DSAQ and QRIQR.

The protein belongs to the IPP transferase family. As to quaternary structure, monomer. Mg(2+) serves as cofactor.

The catalysed reaction is adenosine(37) in tRNA + dimethylallyl diphosphate = N(6)-dimethylallyladenosine(37) in tRNA + diphosphate. In terms of biological role, catalyzes the transfer of a dimethylallyl group onto the adenine at position 37 in tRNAs that read codons beginning with uridine, leading to the formation of N6-(dimethylallyl)adenosine (i(6)A). The protein is tRNA dimethylallyltransferase of Nitrosococcus oceani (strain ATCC 19707 / BCRC 17464 / JCM 30415 / NCIMB 11848 / C-107).